The sequence spans 275 residues: NH(3)-dependent NAD(+) synthetase (275 aa).

ATP is bound at residue 47-54 (GISGGQDS). A Mg(2+)-binding site is contributed by Asp-53. Arg-141 contacts deamido-NAD(+). Thr-161 contacts ATP. Glu-166 provides a ligand contact to Mg(2+). Positions 174 and 181 each coordinate deamido-NAD(+). Residues Lys-190 and Thr-212 each contribute to the ATP site. 261-262 (HK) is a deamido-NAD(+) binding site.

It belongs to the NAD synthetase family. In terms of assembly, homodimer.

It catalyses the reaction deamido-NAD(+) + NH4(+) + ATP = AMP + diphosphate + NAD(+) + H(+). It functions in the pathway cofactor biosynthesis; NAD(+) biosynthesis; NAD(+) from deamido-NAD(+) (ammonia route): step 1/1. Its function is as follows. Catalyzes the ATP-dependent amidation of deamido-NAD to form NAD. Uses ammonia as a nitrogen source. The protein is NH(3)-dependent NAD(+) synthetase of Enterococcus faecalis (strain ATCC 700802 / V583).